The primary structure comprises 540 residues: MTLTNLDVIVVGAGFSGILAVYRLRKLGFRVQGFERQERLGGVWRENAYPGAAVDSLFPFYQFYDAELLQDWEWVEQFPTRAEMLRYFDHVDKRWEISASFEFGVSVSAARYSETTQRWTVSLEDGRRAEARWFIPAVGFSSVLNIPRIPGMSRFRGPIYHTAKWPHDAVSMRGKRVAVIGTGPSGVQIIQSVGKIAKAMTIFQQSPCLTLRKYGSPSQTATALCMRPDDHREALRLGLQTSNGFGYVPRDQDTLDVPIEERNHFYQQRYLAGGWAFWMAGFRDLCQNIQANRDAYDFWARRTRARISDVAKRELLVPQIPSFAFGIKRPCLEEDLYEVMDQPHVKVIDISNQQIELITETGIRVHGQTVECEAIILATGFGDEASGLRSLHIRGRNGIRLEDAWSDGVESHLGMAIHSFPNMVILYGPQCPTLLVNSPAVITVQVEWLCEIIARCQQAGICQLEATSKSHCQWERKMSLLWDKTLYHTHARKSKKTAEANKEEKTWVGGLILYRRELENCLANNLEGFQAWHVEETGLL.

Residues 43–46 (VWRE) and 55–58 (DSLF) contribute to the FAD site. Residues 53–55 (AVD), 182–188 (TGPSGVQ), and 205–206 (QS) contribute to the NADP(+) site.

Belongs to the FAD-binding monooxygenase family. FAD is required as a cofactor.

Its pathway is alkaloid biosynthesis. In terms of biological role, FAD-binding monooxygenase; part of the gene cluster that mediates the biosynthesis of loline alkaloids, potent insecticidal agents composed of a pyrrolizidine ring system and an uncommon ether bridge linking carbons 2 and 7. Lolines are structurally differentiated by the various modifications of the L-amino group and include norloline, loline, N-methylloline, N-acetylloline, N-acetylnorloline, and N-formylloline. The first committed step is the condensation of O-acetyl-L-homoserine (derived from L-aspartic acid) and L-proline, probably catalyzed by the gamma-type pyridoxal 5'-phosphate(PLP)-dependent enzyme lolC, to give the diamino diacid, NACPP. Ensuing cyclization, decarboxylation, and acetylation steps yield 1-exo-acetamidopyrrolizidine (AcAP). LolO is required for installation of the ether bridge upon the pathway intermediate, 1-exo-acetamidopyrrolizidine (AcAP). In sequential 2-oxoglutarate- and O(2)-consuming steps, lolO removes hydrogens from C2 and C7 of AcAP to form both carbon-oxygen bonds in N-acetylnorloline (NANL), the precursor to all other lolines. The enzymes lolD, lolE, lolF and lolT have also been proposed to be involved in the ether-bridge installation. Further processing of the exocyclic moiety of NANL by fungal N-acetamidase (LolN), methyltransferase (LolM), and cytochrome P450 (LolP) enzymes, with occasional involvement of a plant acetyltransferase, generates the other known lolines. LolN transforms NANL to norlonine which is monomethylated and dimethylated to respectively lonine and N-methyllonine (NML) by lolM. LolP catalyzes hydroxylation of the methyl group in N-methylloline (NML) and further oxygenation to N-formylloline (NFL). A plant acetyltransferase is responsible for the acetylation of loline to form N-acetylloline (NAL). LolA might interact with aspartate kinase to prevent feedback inhibition of its activity by these end products and thereby promote production of L-homoserine from L-aspartate. This chain is FAD-binding monooxygenase lolF1, found in Epichloe uncinata (Endophyte fungus).